The following is a 481-amino-acid chain: Zygotic gap protein knirps (481 aa).

A DNA-binding region (nuclear receptor) is located at residues 2 to 78; that stretch reads NQTCKVCGEP…VGMSKGGSRY (77 aa). 2 NR C4-type zinc fingers span residues 5–25 and 42–66; these read CKVC…CEGC and CKND…LRKC. Low complexity-rich tracts occupy residues 100–111, 127–148, 245–264, 316–335, and 420–440; these read AAAGKAPGHATG, QQQQ…QQQQ, TPPT…AASP, SHSS…SPLS, and TTNS…TSST. Disordered regions lie at residues 100–161, 231–294, 308–336, and 420–442; these read AAAG…GYTG, SVDS…PHTI, LLPG…PLSF, and TTNS…STEA.

It belongs to the nuclear hormone receptor family. NR0 subfamily.

It localises to the nucleus. Transcriptional repressor. Binds to multiple sites in the eve stripe 3 enhancer element. Plays an essential role in the segmentation process both by refining the expression patterns of gap genes and by establishing pair-rules stripes of gene expression. In Drosophila virilis (Fruit fly), this protein is Zygotic gap protein knirps (kni).